A 182-amino-acid polypeptide reads, in one-letter code: Signal peptidase I (182 aa).

The Cytoplasmic portion of the chain corresponds to 1–13; the sequence is MTKQKEKRGRRWP. A helical transmembrane segment spans residues 14–30; that stretch reads WFVAVCVVATLRLFVFS. Residues 31–182 lie on the Extracellular side of the membrane; that stretch reads NYVVEGKSMM…WPFKQFAFQF (152 aa). Active-site residues include Ser-38 and Lys-79.

It belongs to the peptidase S26 family.

It is found in the cell membrane. The catalysed reaction is Cleavage of hydrophobic, N-terminal signal or leader sequences from secreted and periplasmic proteins.. The polypeptide is Signal peptidase I (lepB) (Bacillus caldolyticus).